The following is a 434-amino-acid chain: Serine hydroxymethyltransferase (434 aa).

Residues Leu132 and 136–138 each bind (6S)-5,6,7,8-tetrahydrofolate; that span reads GHL. Position 241 is an N6-(pyridoxal phosphate)lysine (Lys241).

It belongs to the SHMT family. Homodimer. The cofactor is pyridoxal 5'-phosphate.

The protein localises to the cytoplasm. It carries out the reaction (6R)-5,10-methylene-5,6,7,8-tetrahydrofolate + glycine + H2O = (6S)-5,6,7,8-tetrahydrofolate + L-serine. The protein operates within one-carbon metabolism; tetrahydrofolate interconversion. It participates in amino-acid biosynthesis; glycine biosynthesis; glycine from L-serine: step 1/1. Functionally, catalyzes the reversible interconversion of serine and glycine with tetrahydrofolate (THF) serving as the one-carbon carrier. This reaction serves as the major source of one-carbon groups required for the biosynthesis of purines, thymidylate, methionine, and other important biomolecules. Also exhibits THF-independent aldolase activity toward beta-hydroxyamino acids, producing glycine and aldehydes, via a retro-aldol mechanism. The polypeptide is Serine hydroxymethyltransferase (Nitrobacter hamburgensis (strain DSM 10229 / NCIMB 13809 / X14)).